We begin with the raw amino-acid sequence, 512 residues long: ATP synthase subunit alpha (512 aa).

ATP is bound at residue Gly-169–Thr-176.

This sequence belongs to the ATPase alpha/beta chains family. F-type ATPases have 2 components, CF(1) - the catalytic core - and CF(0) - the membrane proton channel. CF(1) has five subunits: alpha(3), beta(3), gamma(1), delta(1), epsilon(1). CF(0) has three main subunits: a(1), b(2) and c(9-12). The alpha and beta chains form an alternating ring which encloses part of the gamma chain. CF(1) is attached to CF(0) by a central stalk formed by the gamma and epsilon chains, while a peripheral stalk is formed by the delta and b chains.

The protein resides in the cell inner membrane. The catalysed reaction is ATP + H2O + 4 H(+)(in) = ADP + phosphate + 5 H(+)(out). Its function is as follows. Produces ATP from ADP in the presence of a proton gradient across the membrane. The alpha chain is a regulatory subunit. This is ATP synthase subunit alpha from Rickettsia akari (strain Hartford).